Consider the following 605-residue polypeptide: Formin-binding protein 1-like (605 aa).

An F-BAR domain is found at 1–263 (MSWGTELWDQ…AAKSVDERRD (263 aa)). The stretch at 66 to 258 (FTSCVAFFNI…EGMILAAKSV (193 aa)) forms a coiled coil. The interaction with CDC42 stretch occupies residues 245–535 (SKCLEGMILA…EFDDEFEDDD (291 aa)). Serine 295 carries the phosphoserine modification. Residues 392-484 (LEDFSHLPPE…VEGKTGGRGD (93 aa)) adopt a coiled-coil conformation. An REM-1 domain is found at 397–474 (HLPPEQRRKK…IHKNEAWLSE (78 aa)). Positions 476 to 490 (EGKTGGRGDRRHSSD) are enriched in basic and acidic residues. A disordered region spans residues 476-539 (EGKTGGRGDR…EFEDDDPLPA (64 aa)). Residues serine 488, serine 501, and serine 505 each carry the phosphoserine modification. Residues 522–605 (GHHNEFDDEF…VTLEKNSKGS (84 aa)) are interaction with DNM1. The span at 527-536 (FDDEFEDDDP) shows a compositional bias: acidic residues. The SH3 domain occupies 538-599 (PAIGHCKAIY…PTSYIDVTLE (62 aa)). The interaction with DNM2 and WASL stretch occupies residues 541–597 (GHCKAIYPFDGHNEGTLAMKEGEVLYIIEEDKGDGWTRARRQNGEEGYVPTSYIDVT). The interaction with DAAM1, DIAPH1 and DIAPH2 stretch occupies residues 541-605 (GHCKAIYPFD…VTLEKNSKGS (65 aa)).

This sequence belongs to the FNBP1 family. In terms of assembly, homodimerizes, the dimers can polymerize end-to-end to form filamentous structures. Interacts with GTP-bound CDC42. Interacts with DAAM1, DIAPH1, DIAPH2, DNM1, DNM2 and WASL/N-WASP. Interacts with ATG3. Interacts (via SH3 domain) with ABI1, WASF2, CDC42 and WIPF1.

It is found in the cytoplasm. Its subcellular location is the cytoskeleton. The protein resides in the cell cortex. The protein localises to the cytoplasmic vesicle. It localises to the cell membrane. In terms of biological role, required to coordinate membrane tubulation with reorganization of the actin cytoskeleton during endocytosis. May bind to lipids such as phosphatidylinositol 4,5-bisphosphate and phosphatidylserine and promote membrane invagination and the formation of tubules. Also promotes CDC42-induced actin polymerization by activating the WASL/N-WASP-WASPIP/WIP complex, the predominant form of WASL/N-WASP in cells. Actin polymerization may promote the fission of membrane tubules to form endocytic vesicles. Essential for autophagy of intracellular bacterial pathogens. The chain is Formin-binding protein 1-like (FNBP1L) from Homo sapiens (Human).